The sequence spans 250 residues: Archaeal flagellar motor scaffold protein FlaX (250 aa).

The Extracellular segment spans residues 1–9 (MAIQDLLQS). The chain crosses the membrane as a helical span at residues 10 to 30 (SLFIILIGVGIPIAAFLEILF). Over 31–250 (RVILPKTKRV…MILEGGGVNG (220 aa)) the chain is Cytoplasmic. The span at 42 to 61 (TQQSPQNISQEQRFPTQQKP) shows a compositional bias: polar residues. The disordered stretch occupies residues 42–72 (TQQSPQNISQEQRFPTQQKPANDETSKYSSD). Residues 62 to 72 (ANDETSKYSSD) show a composition bias toward basic and acidic residues.

In terms of assembly, the S.acidocaldarius archaellum assembly machinery and its filament consist of seven proteins (FlaB, FlaF, FlaG, FlaH, FlaI, FlaJ and FlaX). FlaX assembles into ring-shaped oligomers. Interacts directly with FlaH and the motor ATPase FlaI.

The protein resides in the archaeal flagellum. The protein localises to the cell membrane. With respect to regulation, the presence of the flagellar core components FlaH, FlaI and FlaJ seems to be crucial for the stability of FlaX. In terms of biological role, component of the archaellum. FlaX, FlaH and FlaI form the core cytoplasmic motor complex of the crenarchaeal archaellum. FlaX forms a ring that may act as a membrane-bound cytoplasmic scaffold that guides the assembly of the archaellum motor complex. Is essential for archaellum assembly. The sequence is that of Archaeal flagellar motor scaffold protein FlaX from Sulfolobus acidocaldarius (strain ATCC 33909 / DSM 639 / JCM 8929 / NBRC 15157 / NCIMB 11770).